Reading from the N-terminus, the 623-residue chain is Glutathione import ATP-binding protein GsiA (623 aa).

2 consecutive ABC transporter domains span residues 18-272 and 317-567; these read VRNL…QGLL and LQVS…RKLM. ATP-binding positions include 52–59 and 360–367; these read GESGSGKS and GESGCGKS.

This sequence belongs to the ABC transporter superfamily. Glutathione importer (TC 3.A.1.5.11) family. The complex is composed of two ATP-binding proteins (GsiA), two transmembrane proteins (GsiC and GsiD) and a solute-binding protein (GsiB).

It localises to the cell inner membrane. It carries out the reaction glutathione(out) + ATP + H2O = glutathione(in) + ADP + phosphate + H(+). In terms of biological role, part of the ABC transporter complex GsiABCD involved in glutathione import. Responsible for energy coupling to the transport system. This Pectobacterium atrosepticum (strain SCRI 1043 / ATCC BAA-672) (Erwinia carotovora subsp. atroseptica) protein is Glutathione import ATP-binding protein GsiA.